Consider the following 186-residue polypeptide: UPF0301 protein CV_3909 (186 aa).

Belongs to the UPF0301 (AlgH) family.

This is UPF0301 protein CV_3909 from Chromobacterium violaceum (strain ATCC 12472 / DSM 30191 / JCM 1249 / CCUG 213 / NBRC 12614 / NCIMB 9131 / NCTC 9757 / MK).